We begin with the raw amino-acid sequence, 219 residues long: Ras-related protein Rab-3D (219 aa).

At Ala2 the chain carries N-acetylalanine. 29–37 (GNSSVGKTS) is a GDP binding site. Residues Ser31, Ser32, Val33, Gly34, Lys35, Thr36, Ser37, Pro49, and Ser53 each contribute to the GTP site. Thr36 serves as a coordination point for Mg(2+). A Switch 1 motif is present at residues 49–58 (PAFVSTVGID). Residues Thr54 and Asp77 each contribute to the Mg(2+) site. GTP is bound at residue Gly80. A Switch 2 motif is present at residues 80-96 (GQERYRTITTAYYRGAM). The residue at position 86 (Thr86) is a Phosphothreonine; by LRRK2. GTP is bound by residues Asn135, Lys136, Asp138, Ala166, and Lys167. GDP contacts are provided by residues 135-138 (NKCD) and 165-167 (SAK). Ser190 carries the phosphoserine modification. A compositionally biased stretch (low complexity) spans 190–199 (SLEPSSSSGS). The tract at residues 190-219 (SLEPSSSSGSNGKGPAVGDAPAPQPSSCSC) is disordered. S-geranylgeranyl cysteine attachment occurs at residues Cys217 and Cys219. At Cys219 the chain carries Cysteine methyl ester.

It belongs to the small GTPase superfamily. Rab family. As to quaternary structure, interacts with RIMS1, RIMS2, RPH3A, RPH3AL and RAB3IP. The GTP-bound form interacts with REP15. Interacts with CHM and CHML; phosphorylation at Thr-86 disrupts these interactions. Interacts with MADD (via uDENN domain); the GTP-bound form is preferred for interaction. Mg(2+) is required as a cofactor. In terms of processing, phosphorylation of Thr-86 in the switch II region by LRRK2 prevents the association of RAB regulatory proteins, including CHM and CHML. In terms of tissue distribution, highly expressed in granulocytes of peripheral blood. Constitutively expressed at low levels in all hematopoietic cell lines investigated.

It is found in the cell membrane. It carries out the reaction GTP + H2O = GDP + phosphate + H(+). Its activity is regulated as follows. Regulated by guanine nucleotide exchange factors (GEFs) which promote the exchange of bound GDP for free GTP. Regulated by GTPase activating proteins (GAPs) which increase the GTP hydrolysis activity. Inhibited by GDP dissociation inhibitors (GDIs) which prevent Rab-GDP dissociation. Functionally, the small GTPases Rab are key regulators of intracellular membrane trafficking, from the formation of transport vesicles to their fusion with membranes. Rabs cycle between an inactive GDP-bound form and an active GTP-bound form that is able to recruit to membranes different sets of downstream effectors directly responsible for vesicle formation, movement, tethering and fusion. RAB3D may be involved in the insulin-induced exocytosis of GLUT4-containing vesicles in adipocytes. The protein is Ras-related protein Rab-3D of Homo sapiens (Human).